A 255-amino-acid polypeptide reads, in one-letter code: Enolase-phosphatase E1 (255 aa).

Mg(2+) contacts are provided by Asp-22 and Glu-24. Substrate-binding positions include 136 to 137 and Lys-173; that span reads SS. Residue Asp-199 participates in Mg(2+) binding.

The protein belongs to the HAD-like hydrolase superfamily. MasA/MtnC family. In terms of assembly, monomer. Mg(2+) serves as cofactor.

It is found in the cytoplasm. The protein resides in the nucleus. The catalysed reaction is 5-methylsulfanyl-2,3-dioxopentyl phosphate + H2O = 1,2-dihydroxy-5-(methylsulfanyl)pent-1-en-3-one + phosphate. The protein operates within amino-acid biosynthesis; L-methionine biosynthesis via salvage pathway; L-methionine from S-methyl-5-thio-alpha-D-ribose 1-phosphate: step 3/6. It functions in the pathway amino-acid biosynthesis; L-methionine biosynthesis via salvage pathway; L-methionine from S-methyl-5-thio-alpha-D-ribose 1-phosphate: step 4/6. Bifunctional enzyme that catalyzes the enolization of 2,3-diketo-5-methylthiopentyl-1-phosphate (DK-MTP-1-P) into the intermediate 2-hydroxy-3-keto-5-methylthiopentenyl-1-phosphate (HK-MTPenyl-1-P), which is then dephosphorylated to form the acireductone 1,2-dihydroxy-3-keto-5-methylthiopentene (DHK-MTPene). This is Enolase-phosphatase E1 from Verticillium alfalfae (strain VaMs.102 / ATCC MYA-4576 / FGSC 10136) (Verticillium wilt of alfalfa).